Consider the following 701-residue polypeptide: Polyribonucleotide nucleotidyltransferase (701 aa).

Mg(2+) contacts are provided by D490 and D496. The region spanning 557–616 (PKVETMTIKPEKIRDVIGPGGKKINEIIDETGVKLDIEQDGTIFIGAVDQDMINRAREII) is the KH domain. Residues 626-694 (GQVYNAKVRR…DKGRVNASHR (69 aa)) enclose the S1 motif domain.

This sequence belongs to the polyribonucleotide nucleotidyltransferase family. Mg(2+) serves as cofactor.

The protein resides in the cytoplasm. It catalyses the reaction RNA(n+1) + phosphate = RNA(n) + a ribonucleoside 5'-diphosphate. Involved in mRNA degradation. Catalyzes the phosphorolysis of single-stranded polyribonucleotides processively in the 3'- to 5'-direction. The sequence is that of Polyribonucleotide nucleotidyltransferase from Staphylococcus carnosus (strain TM300).